The chain runs to 226 residues: ATP synthase subunit C lysine N-methyltransferase (226 aa).

The helical transmembrane segment at 35-55 (VIGGTLVALYAVATPFVAPAL) threads the bilayer. A required for mitochondrial location region spans residues 48–82 (TPFVAPALRKLCLPYVPATTTQVKNVLKMLRSRTG).

It belongs to the ANT/ATPSC lysine N-methyltransferase family.

It is found in the mitochondrion membrane. Its function is as follows. Mitochondrial protein-lysine N-methyltransferase that promotes chronic pain. Involved in persistent inflammatory and neuropathic pain: methyltransferase activity in the mitochondria of sensory neurons promotes chronic pain via a pathway that depends on the production of reactive oxygen species (ROS) and on the engagement of spinal cord microglia. Protein-lysine N-methyltransferase activity is dependent on S-adenosyl-L-methionine. This chain is ATP synthase subunit C lysine N-methyltransferase (atpsckmt), found in Xenopus laevis (African clawed frog).